A 166-amino-acid chain; its full sequence is Protein FAM163B (166 aa).

The chain crosses the membrane as a helical span at residues 6-26; it reads VVITGGILATVILLCIIAVLC. S40 bears the Phosphoserine mark.

Belongs to the FAM163 family.

The protein resides in the membrane. In Homo sapiens (Human), this protein is Protein FAM163B (FAM163B).